The sequence spans 530 residues: Autoinducer-2 kinase (530 aa).

Belongs to the FGGY kinase family.

It is found in the cytoplasm. The catalysed reaction is (S)-4,5-dihydroxypentane-2,3-dione + ATP = (2S)-2-hydroxy-3,4-dioxopentyl phosphate + ADP + H(+). Functionally, catalyzes the phosphorylation of autoinducer-2 (AI-2) to phospho-AI-2, which subsequently inactivates the transcriptional regulator LsrR and leads to the transcription of the lsr operon. Phosphorylates the ring-open form of (S)-4,5-dihydroxypentane-2,3-dione (DPD), which is the precursor to all AI-2 signaling molecules, at the C5 position. The polypeptide is Autoinducer-2 kinase (Escherichia coli (strain K12 / DH10B)).